A 394-amino-acid chain; its full sequence is uncharacterized protein (394 aa).

11 consecutive transmembrane segments (helical) span residues 10–30 (PALI…NYYA), 50–70 (FIVT…VPLG), 79–99 (IVSM…SQSL), 100–120 (AMMI…QILV), 138–158 (TIMS…GLLA), 166–186 (VFWV…RGLP), 218–238 (LLGC…AFLL), 243–263 (FNYS…GALG), 291–311 (WLAI…ILVL), 337–357 (LTAG…LISA), and 364–384 (GWAG…LVWW).

This sequence belongs to the major facilitator superfamily.

It localises to the cell inner membrane. This is an uncharacterized protein from Escherichia coli (strain K12).